A 421-amino-acid chain; its full sequence is ATP-dependent RNA helicase RhlB (421 aa).

Positions 9 to 37 (QKFSDFALHPKVVEALEKKGFHNCTPIQA) match the Q motif motif. The 180-residue stretch at 40–219 (LPLTLAGRDV…FEQMNNAEYI (180 aa)) folds into the Helicase ATP-binding domain. Residue 53 to 60 (AQTGTGKT) participates in ATP binding. The DEAD box signature appears at 165-168 (DEAD). One can recognise a Helicase C-terminal domain in the interval 245–390 (RLLQTLIEEE…VSKYNPDALM (146 aa)). The interval 395 to 421 (KPLRLTRARTGNGPRRTGAPRNRRRSG) is disordered. Positions 402–414 (ARTGNGPRRTGAP) are enriched in low complexity.

Belongs to the DEAD box helicase family. RhlB subfamily. Component of the RNA degradosome, which is a multiprotein complex involved in RNA processing and mRNA degradation.

The protein resides in the cytoplasm. The catalysed reaction is ATP + H2O = ADP + phosphate + H(+). DEAD-box RNA helicase involved in RNA degradation. Has RNA-dependent ATPase activity and unwinds double-stranded RNA. This Shigella flexneri serotype 5b (strain 8401) protein is ATP-dependent RNA helicase RhlB.